The primary structure comprises 346 residues: Zinc transporter YKE4 (346 aa).

Residues 1 to 2 (MK) lie on the Extracellular side of the membrane. A helical membrane pass occupies residues 3-23 (ASHICSYLLSIAPLVVSHGVH). Residues 24–69 (HNRDHGHEANHESKQSFLILKQESIFYSLVCFLQNHLFVLGPRYNA) lie on the Cytoplasmic side of the membrane. Residues 70–90 (IVAILIIQLMPCLFVLFVPGL) form a helical membrane-spanning segment. The Extracellular portion of the chain corresponds to 91 to 99 (RKNDRASLT). A helical transmembrane segment spans residues 100-120 (LSLLVSFSLGTLLGDILLHVI). Residues 121 to 126 (PESLSG) lie on the Cytoplasmic side of the membrane. A helical transmembrane segment spans residues 127–147 (VTDVTMVGGAIFLGFISFLTL). At 148-202 (DKTMRILSGTSNDDGSIHSHSHSHTPQQTAEKKAGFNMSAYLNVISGIAHHITDG) the chain is on the extracellular side. Asn-184 carries N-linked (GlcNAc...) asparagine glycosylation. A helical membrane pass occupies residues 203 to 223 (IALATSFYSSTQVGIMTSIAV). The Cytoplasmic portion of the chain corresponds to 224–252 (TFHEIPHELGDFAILLSSGFTFPQAIRAQ). Residues 253–273 (AVTAFGAVVGTSIGCWMNEIG) form a helical membrane-spanning segment. N-linked (GlcNAc...) asparagine glycans are attached at residues Asn-274 and Asn-285. Over 274–290 (NNSHKATSSSANASELM) the chain is Extracellular. The chain crosses the membrane as a helical span at residues 291 to 311 (LPFTAGGLIYIATTSVVPQIL). Over 312 to 322 (HSSAPDSKLRE) the chain is Cytoplasmic. Residues 323-343 (FKKWALQLVFIFVGFAVMALM) form a helical membrane-spanning segment. Topologically, residues 344–346 (DEH) are extracellular.

It belongs to the ZIP transporter (TC 2.A.5) family. KE4/Catsup subfamily.

The protein resides in the endoplasmic reticulum membrane. Zinc transporter whose role depends on the zinc status of the cells. It helps to balance zinc levels between the cytosol and the secretory pathway. It transports zinc into the secretory pathway in a zinc-adequate environment and in a high zinc medium. In high zinc medium, transport of zinc into the secretory pathway is a way to eliminate zinc from the cytosol. Under low cytosolic zinc conditions, it removes zinc from the secretory pathway and acts as a zinc importer that helps to alleviate ER stress. This is Zinc transporter YKE4 (YKE4) from Saccharomyces cerevisiae (strain ATCC 204508 / S288c) (Baker's yeast).